The following is a 699-amino-acid chain: D-(-)-3-hydroxybutyrate oligomer hydrolase (699 aa).

The signal sequence occupies residues 1-33; that stretch reads MTAIRGGSRRAPGLALALLGGVLLGACHGDENA. The active-site Charge relay system is S311.

Belongs to the D-(-)-3-hydroxybutyrate oligomer hydrolase family.

It localises to the secreted. It carries out the reaction (3R)-hydroxybutanoate dimer + H2O = 2 (R)-3-hydroxybutanoate + H(+). The protein operates within lipid metabolism; butanoate metabolism. In terms of biological role, participates in the degradation of poly-3-hydroxybutyrate (PHB). It works downstream of poly(3-hydroxybutyrate) depolymerase, hydrolyzing D(-)-3-hydroxybutyrate oligomers of various length (3HB-oligomers) into 3HB-monomers. In Burkholderia mallei (strain SAVP1), this protein is D-(-)-3-hydroxybutyrate oligomer hydrolase.